Reading from the N-terminus, the 89-residue chain is Small ribosomal subunit protein uS15 (89 aa).

A compositionally biased stretch (basic and acidic residues) spans Met-1 to Gly-16. Positions Met-1 to Ser-24 are disordered.

This sequence belongs to the universal ribosomal protein uS15 family. Part of the 30S ribosomal subunit. Forms a bridge to the 50S subunit in the 70S ribosome, contacting the 23S rRNA.

In terms of biological role, one of the primary rRNA binding proteins, it binds directly to 16S rRNA where it helps nucleate assembly of the platform of the 30S subunit by binding and bridging several RNA helices of the 16S rRNA. Its function is as follows. Forms an intersubunit bridge (bridge B4) with the 23S rRNA of the 50S subunit in the ribosome. The protein is Small ribosomal subunit protein uS15 of Ralstonia pickettii (strain 12J).